Reading from the N-terminus, the 154-residue chain is MTVYTYTVFLFNWENIGLMEQQNPDRLKKDRELIYAIVTAKGIISRFFWSILSFLITNLIFFFAAFVALLIYLLASVDNQFAFVFIAAIIFIIFYNIFFLSYLLFIYFKGQKAIENNCKYLLTILDIKSDELLPFSLLGSLRKGYMLDEMLLEQ.

The next 2 membrane-spanning stretches (helical) occupy residues phenylalanine 54 to leucine 74 and phenylalanine 81 to serine 101.

It localises to the cell membrane. This is an uncharacterized protein from Mycoplasma genitalium (strain ATCC 33530 / DSM 19775 / NCTC 10195 / G37) (Mycoplasmoides genitalium).